The following is a 190-amino-acid chain: Spermatogenesis-associated protein 12 (190 aa).

In terms of tissue distribution, expressed in testis.

The polypeptide is Spermatogenesis-associated protein 12 (SPATA12) (Homo sapiens (Human)).